We begin with the raw amino-acid sequence, 203 residues long: Guanylate kinase (203 aa).

In terms of domain architecture, Guanylate kinase-like spans 3–181; the sequence is GTLYIVAAPS…AVSEMCAIFT (179 aa). 10-17 contacts ATP; the sequence is APSGAGKS.

This sequence belongs to the guanylate kinase family.

It localises to the cytoplasm. It carries out the reaction GMP + ATP = GDP + ADP. Functionally, essential for recycling GMP and indirectly, cGMP. In Xanthomonas oryzae pv. oryzae (strain MAFF 311018), this protein is Guanylate kinase.